A 380-amino-acid chain; its full sequence is Cytochrome b (380 aa).

The next 4 helical transmembrane spans lie at 34–54 (FGSLLGLCLIAQIATGLFLAM), 78–99 (WLLRNLHANGASFFFICIYFHI), 114–134 (WNIGVILLFLLMATAFVGYVL), and 179–199 (FFTFHFILPFIITAVSLIHLL). 2 residues coordinate heme b: H84 and H98. Residues H183 and H197 each contribute to the heme b site. H202 is an a ubiquinone binding site. Transmembrane regions (helical) follow at residues 227-247 (YKDLLGFVIMLGALASLSTFA), 289-309 (LGGVLAVVLSIMVLFLMPIIH), 321-341 (IAKTFFWALIANTAILTWIGG), and 348-368 (FITIGQIASGLYFLIFVLLIP).

It belongs to the cytochrome b family. As to quaternary structure, the cytochrome bc1 complex contains 3 respiratory subunits (MT-CYB, CYC1 and UQCRFS1), 2 core proteins (UQCRC1 and UQCRC2) and probably 6 low-molecular weight proteins. The cofactor is heme b.

The protein resides in the mitochondrion inner membrane. In terms of biological role, component of the ubiquinol-cytochrome c reductase complex (complex III or cytochrome b-c1 complex) that is part of the mitochondrial respiratory chain. The b-c1 complex mediates electron transfer from ubiquinol to cytochrome c. Contributes to the generation of a proton gradient across the mitochondrial membrane that is then used for ATP synthesis. This is Cytochrome b (mt-cyb) from Rana amurensis (Siberian wood frog).